The chain runs to 306 residues: Beta-lactamase (306 aa).

Positions 1-34 are cleaved as a signal peptide; the sequence is MNVKRKATLKFGICIGLLCVSFTGFNSLFGSTHA. The Acyl-ester intermediate role is filled by Ser-89. A substrate-binding site is contributed by 251–253; it reads KSG.

Belongs to the class-A beta-lactamase family.

The enzyme catalyses a beta-lactam + H2O = a substituted beta-amino acid. In terms of biological role, this protein is a beta-lactamase with a substrate specificity for penicillins. The protein is Beta-lactamase (penP) of Bacillus amyloliquefaciens (Bacillus velezensis).